Consider the following 121-residue polypeptide: MIKLRLKRFGKKKEASFRIVACNSTSRRDGRPLQELGFYNPRTKETRLDTEALRTRLTQGAQPTDVVRTLLEKGGLLEKTERPSIAIGKAKLEKEKLAKAKTKDEENDNSKVESEGNEAES.

Residues 97–114 (LAKAKTKDEENDNSKVES) show a composition bias toward basic and acidic residues. Residues 97–121 (LAKAKTKDEENDNSKVESEGNEAES) are disordered.

The protein belongs to the bacterial ribosomal protein bS16 family.

The protein is Small ribosomal subunit protein bS16 of Prochlorococcus marinus (strain AS9601).